The sequence spans 365 residues: Aminomethyltransferase (365 aa).

This sequence belongs to the GcvT family. In terms of assembly, the glycine cleavage system is composed of four proteins: P, T, L and H.

It carries out the reaction N(6)-[(R)-S(8)-aminomethyldihydrolipoyl]-L-lysyl-[protein] + (6S)-5,6,7,8-tetrahydrofolate = N(6)-[(R)-dihydrolipoyl]-L-lysyl-[protein] + (6R)-5,10-methylene-5,6,7,8-tetrahydrofolate + NH4(+). Functionally, the glycine cleavage system catalyzes the degradation of glycine. This is Aminomethyltransferase from Halalkalibacterium halodurans (strain ATCC BAA-125 / DSM 18197 / FERM 7344 / JCM 9153 / C-125) (Bacillus halodurans).